The sequence spans 295 residues: GTPase Era (295 aa).

The 169-residue stretch at 3-171 (KSGFITVIGR…LELMKKYLPE (169 aa)) folds into the Era-type G domain. Residues 11–18 (GRPNVGKS) are G1. 11–18 (GRPNVGKS) is a binding site for GTP. A G2 region spans residues 37 to 41 (QTTRN). Positions 58–61 (DTPG) are G3. GTP contacts are provided by residues 58 to 62 (DTPGM) and 120 to 123 (NKID). The G4 stretch occupies residues 120–123 (NKID). The interval 150-152 (ISA) is G5. The region spanning 202–279 (LSEEVPHGIA…SLKVWVKVKK (78 aa)) is the KH type-2 domain.

The protein belongs to the TRAFAC class TrmE-Era-EngA-EngB-Septin-like GTPase superfamily. Era GTPase family. As to quaternary structure, monomer.

The protein resides in the cytoplasm. It localises to the cell membrane. In terms of biological role, an essential GTPase that binds both GDP and GTP, with rapid nucleotide exchange. Plays a role in 16S rRNA processing and 30S ribosomal subunit biogenesis and possibly also in cell cycle regulation and energy metabolism. This chain is GTPase Era, found in Clostridium tetani (strain Massachusetts / E88).